The sequence spans 93 residues: Putative pterin-4-alpha-carbinolamine dehydratase (93 aa).

The protein belongs to the pterin-4-alpha-carbinolamine dehydratase family.

The catalysed reaction is (4aS,6R)-4a-hydroxy-L-erythro-5,6,7,8-tetrahydrobiopterin = (6R)-L-erythro-6,7-dihydrobiopterin + H2O. The protein is Putative pterin-4-alpha-carbinolamine dehydratase of Mycolicibacterium vanbaalenii (strain DSM 7251 / JCM 13017 / BCRC 16820 / KCTC 9966 / NRRL B-24157 / PYR-1) (Mycobacterium vanbaalenii).